A 65-amino-acid polypeptide reads, in one-letter code: Large ribosomal subunit protein bL35 (65 aa).

Belongs to the bacterial ribosomal protein bL35 family.

The sequence is that of Large ribosomal subunit protein bL35 from Aeromonas salmonicida (strain A449).